The chain runs to 217 residues: Probable GTP-binding protein EngB (217 aa).

The 178-residue stretch at 37-214 (AGVEVAFAGR…RAAMARLIGE (178 aa)) folds into the EngB-type G domain. Residues 45-52 (GRSNVGKS), 72-76 (GRTQE), 92-95 (DMPG), 159-162 (TKAD), and 193-195 (TSS) each bind GTP. 2 residues coordinate Mg(2+): S52 and T74.

It belongs to the TRAFAC class TrmE-Era-EngA-EngB-Septin-like GTPase superfamily. EngB GTPase family. Mg(2+) serves as cofactor.

In terms of biological role, necessary for normal cell division and for the maintenance of normal septation. This Nitrobacter hamburgensis (strain DSM 10229 / NCIMB 13809 / X14) protein is Probable GTP-binding protein EngB.